The chain runs to 918 residues: DNA mismatch repair protein MutS (918 aa).

Residue 662–669 (GPNMAGKS) participates in ATP binding.

It belongs to the DNA mismatch repair MutS family.

This protein is involved in the repair of mismatches in DNA. It is possible that it carries out the mismatch recognition step. This protein has a weak ATPase activity. This Sorangium cellulosum (strain So ce56) (Polyangium cellulosum (strain So ce56)) protein is DNA mismatch repair protein MutS.